A 1021-amino-acid polypeptide reads, in one-letter code: tRNA wybutosine-synthesizing protein 4 (1021 aa).

S-adenosyl-L-methionine is bound by residues Arg68, Asp122, 171–172, and Glu198; that span reads DL. Residues 826 to 980 form the JmjC domain; the sequence is PTEAPANLAE…STGRDVYGNR (155 aa).

It belongs to the methyltransferase superfamily. LCMT family.

It catalyses the reaction 7-[(3S)-3-amino-3-carboxypropyl]wyosine(37) in tRNA(Phe) + S-adenosyl-L-methionine = 7-[(3S)-(3-amino-3-methoxycarbonyl)propyl]wyosine(37) in tRNA(Phe) + S-adenosyl-L-homocysteine. The catalysed reaction is 7-[(3S)-(3-amino-3-methoxycarbonyl)propyl]wyosine(37) in tRNA(Phe) + S-adenosyl-L-methionine + CO2 = wybutosine(37) in tRNA(Phe) + S-adenosyl-L-homocysteine + 2 H(+). Its pathway is tRNA modification; wybutosine-tRNA(Phe) biosynthesis. Functionally, probable S-adenosyl-L-methionine-dependent methyltransferase that acts as a component of the wybutosine biosynthesis pathway. Wybutosine is a hyper modified guanosine with a tricyclic base found at the 3'-position adjacent to the anticodon of eukaryotic phenylalanine tRNA. May methylate the carboxyl group of leucine residues to form alpha-leucine ester residues. The sequence is that of tRNA wybutosine-synthesizing protein 4 (PPM2) from Gibberella zeae (strain ATCC MYA-4620 / CBS 123657 / FGSC 9075 / NRRL 31084 / PH-1) (Wheat head blight fungus).